Reading from the N-terminus, the 326-residue chain is MSKIRIGIVGYGNLGRGVEAAIQQNPDMELVAVFTRRDPKTVAVKSNVKVLHVDDAQSYKDEIDVMILCGGSATDLPEQGPYFAQYFNTIDSFDTHARIPDYFDAVNAAAEQSGKVAIISVGWDPGLFSLNRLLGEVVLPVGNTYTFWGKGVSQGHSDAIRRIQGVKNAVQYTIPIDEAVNRVRSGENPELSTREKHARECFVVLEEGADPAKVEHEIKTMPNYFDEYDTTVHFISEEELKQNHSGMPHGGFVIRSGKSDEGHKQIIEFSLNLESNPMFTSSALVAYARAAYRLSQNGDKGAKTVFDIPFGLLSPKSPEDLRKELL.

Residues 11 to 14 (YGNL), 35 to 37 (TRR), 69 to 72 (CGGS), 92 to 94 (SFD), and 121 to 125 (VGWDP) each bind NADP(+). Substrate contacts are provided by residues Asp-94, Asp-124, Trp-148, 154–155 (QG), Thr-173, Arg-199, His-249, and Asn-276.

This sequence belongs to the diaminopimelate dehydrogenase family. In terms of assembly, homodimer.

The catalysed reaction is meso-2,6-diaminopimelate + NADP(+) + H2O = (S)-2-amino-6-oxoheptanedioate + NH4(+) + NADPH + H(+). It participates in amino-acid biosynthesis; L-lysine biosynthesis via DAP pathway; DL-2,6-diaminopimelate from (S)-tetrahydrodipicolinate: step 1/1. With respect to regulation, the enzyme is completely inhibited by p-chloromercuribenzoate and HgCl(2) in vitro. Thioglycollate, L-cysteine and Cu(2+) also strongly inhibit the enzyme. Catalyzes the reversible NADPH-dependent reductive amination of L-2-amino-6-oxopimelate, the acyclic form of L-tetrahydrodipicolinate, to generate the meso compound, D,L-2,6-diaminopimelate. Probably plays a role in lysine biosynthesis. Is highly specific for meso-2,6-diaminopimelate as the electron donor, since the following amino acids are inert for the oxidative deamination reaction: DL-2-aminopimelate, D-glutamate, L-glutamate, D-aspartate, L-aspartate, D-alanine, L-alanine, D-valine, L-valine, D-lysine, L-lysine, D-phenylalanine, L-phenylalanine, D-leucine, L-leucine, D-threonine, L-threonine, D-serine, L-serine, D-tryptophan, L-tryptophan, D-cysteine, L-cysteine, D-histidine, L-histidine, D-methionine, D-arginine, D-proline, D-asparagine, D-glutamine, D-isoleucine and D-ornithine. Moreover, exclusively uses NADP as the electron acceptor for the oxidative deamination of meso-DAP; NAD is inert. The polypeptide is Meso-diaminopimelate D-dehydrogenase (ddh) (Ureibacillus thermosphaericus).